Reading from the N-terminus, the 120-residue chain is Large ribosomal subunit protein bL20c (120 aa).

The protein belongs to the bacterial ribosomal protein bL20 family.

It is found in the plastid. Binds directly to 23S ribosomal RNA and is necessary for the in vitro assembly process of the 50S ribosomal subunit. It is not involved in the protein synthesizing functions of that subunit. The protein is Large ribosomal subunit protein bL20c (rpl20) of Cuscuta gronovii (Common dodder).